Consider the following 231-residue polypeptide: Dephospho-CoA kinase domain-containing protein (231 aa).

The 205-residue stretch at 3-207 (LVGLTGGIAS…RSLEYLPLRF (205 aa)) folds into the DPCK domain. 8-15 (GGIASGKS) provides a ligand contact to ATP.

This sequence belongs to the CoaE family.

The protein is Dephospho-CoA kinase domain-containing protein (DCAKD) of Homo sapiens (Human).